Consider the following 255-residue polypeptide: Tumor necrosis factor receptor superfamily member 9 (255 aa).

Residues 1-23 (MGNSCYNIVATLLLVLNFERTRS) form the signal peptide. 4 TNFR-Cys repeats span residues 24-45 (LQDPCSNCPAGTFCDNNRNQIC), 47-86 (PCPPNSFSSAGGQRTCDICRQCKGVFRTRKECSSTSNAEC), 87-118 (DCTPGFHCLGAGCSMCEQDCKQGQELTKKGCK), and 119-159 (DCCF…VVCG). The Extracellular portion of the chain corresponds to 24–186 (LQDPCSNCPA…PAREPGHSPQ (163 aa)). Intrachain disulfides connect C28/C37, C31/C45, C48/C62, C65/C78, C68/C86, C88/C94, C99/C106, C102/C117, and C121/C133. 2 N-linked (GlcNAc...) asparagine glycosylation sites follow: N138 and N149. C139 and C158 form a disulfide bridge. The tract at residues 161-180 (SPADLSPGASSVTPPAPARE) is disordered. The chain crosses the membrane as a helical span at residues 187-213 (IISFFLALTSTALLFLLFFLTLRFSVV). Topologically, residues 214-255 (KRGRKKLLYIFKQPFMRPVQTTQEEDGCSCRFPEEEEGGCEL) are cytoplasmic. An interaction with LRR-1 region spans residues 214–255 (KRGRKKLLYIFKQPFMRPVQTTQEEDGCSCRFPEEEEGGCEL).

Predominantly homodimeric, but may also exist as a monomer. Interacts with TRAF1, TRAF2 and TRAF3. Interacts with LRR-repeat protein 1/LRR-1. As to expression, expressed on the surface of activated T-cells.

The protein localises to the cell membrane. Its function is as follows. Receptor for TNFSF9/4-1BBL. Conveys a signal that enhances CD8(+) T-cell survival, cytotoxicity, and mitochondrial activity, thereby promoting immunity against viruses and tumors. This chain is Tumor necrosis factor receptor superfamily member 9 (TNFRSF9), found in Homo sapiens (Human).